Here is a 285-residue protein sequence, read N- to C-terminus: Phosphatidylserine decarboxylase proenzyme (285 aa).

Active-site charge relay system; for autoendoproteolytic cleavage activity residues include Asp89, His146, and Ser252. Ser252 serves as the catalytic Schiff-base intermediate with substrate; via pyruvic acid; for decarboxylase activity. Ser252 is subject to Pyruvic acid (Ser); by autocatalysis.

It belongs to the phosphatidylserine decarboxylase family. PSD-B subfamily. Prokaryotic type I sub-subfamily. As to quaternary structure, heterodimer of a large membrane-associated beta subunit and a small pyruvoyl-containing alpha subunit. Requires pyruvate as cofactor. Post-translationally, is synthesized initially as an inactive proenzyme. Formation of the active enzyme involves a self-maturation process in which the active site pyruvoyl group is generated from an internal serine residue via an autocatalytic post-translational modification. Two non-identical subunits are generated from the proenzyme in this reaction, and the pyruvate is formed at the N-terminus of the alpha chain, which is derived from the carboxyl end of the proenzyme. The autoendoproteolytic cleavage occurs by a canonical serine protease mechanism, in which the side chain hydroxyl group of the serine supplies its oxygen atom to form the C-terminus of the beta chain, while the remainder of the serine residue undergoes an oxidative deamination to produce ammonia and the pyruvoyl prosthetic group on the alpha chain. During this reaction, the Ser that is part of the protease active site of the proenzyme becomes the pyruvoyl prosthetic group, which constitutes an essential element of the active site of the mature decarboxylase.

It is found in the cell membrane. The enzyme catalyses a 1,2-diacyl-sn-glycero-3-phospho-L-serine + H(+) = a 1,2-diacyl-sn-glycero-3-phosphoethanolamine + CO2. The protein operates within phospholipid metabolism; phosphatidylethanolamine biosynthesis; phosphatidylethanolamine from CDP-diacylglycerol: step 2/2. Catalyzes the formation of phosphatidylethanolamine (PtdEtn) from phosphatidylserine (PtdSer). This Vibrio vulnificus (strain CMCP6) protein is Phosphatidylserine decarboxylase proenzyme.